The chain runs to 178 residues: Deoxycytidylate deaminase (178 aa).

A CMP/dCMP-type deaminase domain is found at 14-145 (EWPEYFMAVA…DEATAARLLF (132 aa)). H84 provides a ligand contact to Zn(2+). E86 acts as the Proton donor in catalysis. Zn(2+)-binding residues include C110 and C113. S174 carries the phosphoserine modification.

Belongs to the cytidine and deoxycytidylate deaminase family. Homohexamer. Zn(2+) serves as cofactor.

The enzyme catalyses dCMP + H2O + H(+) = dUMP + NH4(+). It catalyses the reaction 5-hydroxymethyl-dCMP + H2O + H(+) = 5-hydroxymethyl-dUMP + NH4(+). With respect to regulation, allosteric enzyme whose activity is greatly influenced by the end products of its metabolic pathway, dCTP and dTTP. Functionally, catalyzes the deamination of dCMP to dUMP, providing the nucleoside monophosphate substrate for the thymidylate synthase/TYMS. Also, part of a nucleotide salvage pathway that eliminates epigenetically modified 5-hydroxymethyl-dCMP (hmdCMP) in a two-step process entailing deamination to cytotoxic 5-hydroxymethyl-dUMP (hmdUMP), followed by its hydrolysis into 5-hydroxymethyluracil (hmU) and 2-deoxy-D-ribose 5-phosphate (deoxyribosephosphate). Catalyzes the first step in that pathway, the deamination of 5-hydroxymethyl-dCMP (hmdCMP). This chain is Deoxycytidylate deaminase, found in Homo sapiens (Human).